The following is a 126-amino-acid chain: Holo-[acyl-carrier-protein] synthase (126 aa).

Asp9 and Glu58 together coordinate Mg(2+).

Belongs to the P-Pant transferase superfamily. AcpS family. It depends on Mg(2+) as a cofactor.

It is found in the cytoplasm. The enzyme catalyses apo-[ACP] + CoA = holo-[ACP] + adenosine 3',5'-bisphosphate + H(+). Transfers the 4'-phosphopantetheine moiety from coenzyme A to a Ser of acyl-carrier-protein. In Edwardsiella ictaluri (strain 93-146), this protein is Holo-[acyl-carrier-protein] synthase.